Consider the following 269-residue polypeptide: MGINIVDTTLRDGEQKAGIALSVQDKVEIAKIISEMGVHQIEAGIPAMGGDEKISVSKIAALGLPSKIAAWNRMSTKDIDTSIECGVDIVHISSPVSDLQIKTKLEKDRKWVAENLKRTVIYALEKDCEVTVGLEDSSRADLNFLIQLCEMIFALGVKRVRYADTVGIMEPKELYSQIKKIRDKVPIDIEIHVHNDFGMAISNSFAAFKAGAKFADCTITGMGERAGNCDFLKFVKVIQELTGEKIYTGDFEDIIEKENEIKKILRLNW.

A Pyruvate carboxyltransferase domain is found at 3-255 (INIVDTTLRD…IYTGDFEDII (253 aa)).

This sequence belongs to the alpha-IPM synthase/homocitrate synthase family. Heterodimer of an alpha and an omega chain.

It carries out the reaction acetyl-CoA + 2-oxoglutarate + H2O = (2R)-homocitrate + CoA + H(+). In terms of biological role, this protein is a Fe-Mo-cofactor biosynthetic component. In Clostridium pasteurianum, this protein is Homocitrate synthase subunit alpha (nifV-ALPHA).